Consider the following 166-residue polypeptide: CDP-archaeol synthase (166 aa).

Transmembrane regions (helical) follow at residues 1 to 21, 55 to 75, 78 to 98, 110 to 130, and 131 to 151; these read MPIIYYVIFAILYYLPALVAN, LLVAVTFGTTVGIILAKFLGI, IYVSFIESLLAMLGDMVGAFI, AIGLDQLDFILGATLALIISK, and ISLNIYEFLSIVVIAFVLHIL.

Belongs to the CDP-archaeol synthase family. It depends on Mg(2+) as a cofactor.

Its subcellular location is the cell membrane. The enzyme catalyses 2,3-bis-O-(geranylgeranyl)-sn-glycerol 1-phosphate + CTP + H(+) = CDP-2,3-bis-O-(geranylgeranyl)-sn-glycerol + diphosphate. The protein operates within membrane lipid metabolism; glycerophospholipid metabolism. Functionally, catalyzes the formation of CDP-2,3-bis-(O-geranylgeranyl)-sn-glycerol (CDP-archaeol) from 2,3-bis-(O-geranylgeranyl)-sn-glycerol 1-phosphate (DGGGP) and CTP. This reaction is the third ether-bond-formation step in the biosynthesis of archaeal membrane lipids. In Sulfurisphaera tokodaii (strain DSM 16993 / JCM 10545 / NBRC 100140 / 7) (Sulfolobus tokodaii), this protein is CDP-archaeol synthase.